Here is a 124-residue protein sequence, read N- to C-terminus: Non-structural protein 2 (124 aa).

Residues 121–124 (DLNP) carry the DLNP; interaction with MAP1B motif.

The protein belongs to the pneumovirus non-structural protein 2 family. Monomer (instable). Homomultimer. Heteromultimer with NS1. Interacts with host RIGI (via N-terminus); this interaction prevents host signaling pathway involved in interferon production. Interacts with host MAP1B/microtubule-associated protein 1B.

It localises to the host mitochondrion. Functionally, plays a major role in antagonizing the type I IFN-mediated antiviral response. Acts cooperatively with NS1 to repress activation and nuclear translocation of host IFN-regulatory factor IRF3. Interacts with the host cytoplasmic sensor of viral nucleic acids RIGI and prevents the interaction with its downstream partner MAVS. Together with NS2, participates in the proteasomal degradation of host STAT2, IRF3, IRF7, TBK1 and RIGI through a NS-degradasome involving CUL2 and Elongin-C. The degradasome requires an intact mitochondrial MAVS. Induces host SOCS1 expression. Induces activation of NF-kappa-B. Suppresses premature apoptosis by an NF-kappa-B-dependent, interferon-independent mechanism promoting continued viral replication. In Human respiratory syncytial virus B (strain 18537), this protein is Non-structural protein 2 (1B).